The primary structure comprises 676 residues: Methionine--tRNA ligase (676 aa).

A 'HIGH' region motif is present at residues 11-21 (PYANGPCHLGH). 4 residues coordinate Zn(2+): Cys-143, Cys-146, Cys-156, and Cys-159. The 'KMSKS' region motif lies at 326 to 330 (KMSTS). Position 329 (Thr-329) interacts with ATP. Positions 581–676 (EFGKVKLVVG…TEGNVGEYIK (96 aa)) constitute a tRNA-binding domain.

It belongs to the class-I aminoacyl-tRNA synthetase family. MetG type 1 subfamily. Homodimer. The cofactor is Zn(2+).

It is found in the cytoplasm. The catalysed reaction is tRNA(Met) + L-methionine + ATP = L-methionyl-tRNA(Met) + AMP + diphosphate. Is required not only for elongation of protein synthesis but also for the initiation of all mRNA translation through initiator tRNA(fMet) aminoacylation. The sequence is that of Methionine--tRNA ligase from Methanosphaera stadtmanae (strain ATCC 43021 / DSM 3091 / JCM 11832 / MCB-3).